Here is a 382-residue protein sequence, read N- to C-terminus: Chorismate synthase (382 aa).

Residues Arg39 and Arg45 each contribute to the NADP(+) site. Residues 127–129, 245–246, Gly290, 305–309, and Arg331 each bind FMN; these read RAS, QA, and KPIPT.

Belongs to the chorismate synthase family. In terms of assembly, homotetramer. FMNH2 serves as cofactor.

The catalysed reaction is 5-O-(1-carboxyvinyl)-3-phosphoshikimate = chorismate + phosphate. The protein operates within metabolic intermediate biosynthesis; chorismate biosynthesis; chorismate from D-erythrose 4-phosphate and phosphoenolpyruvate: step 7/7. In terms of biological role, catalyzes the anti-1,4-elimination of the C-3 phosphate and the C-6 proR hydrogen from 5-enolpyruvylshikimate-3-phosphate (EPSP) to yield chorismate, which is the branch point compound that serves as the starting substrate for the three terminal pathways of aromatic amino acid biosynthesis. This reaction introduces a second double bond into the aromatic ring system. This chain is Chorismate synthase, found in Desulfitobacterium hafniense (strain Y51).